The chain runs to 502 residues: Maturase K (502 aa).

The protein belongs to the intron maturase 2 family. MatK subfamily.

It localises to the plastid. The protein resides in the chloroplast. Functionally, usually encoded in the trnK tRNA gene intron. Probably assists in splicing its own and other chloroplast group II introns. This chain is Maturase K, found in Vitis vinifera (Grape).